Consider the following 435-residue polypeptide: Histidinol dehydrogenase (435 aa).

NAD(+)-binding residues include Tyr-131, Gln-189, and Asn-212. 3 residues coordinate substrate: Ser-238, Gln-260, and His-263. Zn(2+) contacts are provided by Gln-260 and His-263. Active-site proton acceptor residues include Glu-327 and His-328. Residues His-328, Asp-361, Glu-415, and His-420 each contribute to the substrate site. Residue Asp-361 participates in Zn(2+) binding. His-420 lines the Zn(2+) pocket.

The protein belongs to the histidinol dehydrogenase family. In terms of assembly, homodimer. Zn(2+) is required as a cofactor.

It carries out the reaction L-histidinol + 2 NAD(+) + H2O = L-histidine + 2 NADH + 3 H(+). Its pathway is amino-acid biosynthesis; L-histidine biosynthesis; L-histidine from 5-phospho-alpha-D-ribose 1-diphosphate: step 9/9. In terms of biological role, catalyzes the sequential NAD-dependent oxidations of L-histidinol to L-histidinaldehyde and then to L-histidine. The chain is Histidinol dehydrogenase (hisD) from Buchnera aphidicola subsp. Schizaphis graminum (strain Sg).